A 539-amino-acid polypeptide reads, in one-letter code: MVQGEESSWRMAASTHHERAIPLNQALAYGVQAHASPSVAAAPPASFLDFQPAAAAAAYFGELEEALIHGANAGGVVDPGMIRADVHSKSAAAAATAGYLAARPPTLEIFPSWPMRQQQQLHSGNSQSVGSTTDSSSAQNTMPQMELVSPASIRASSEHQHQQQQPGQEVMMVTTDDYSYKPGLAAASPSFQQQHQLQHHQQQQLHGGGDHDKRKHGSTRKDGKSVDAKTERRLAQNREAARKSRLRKKAYVQNLETSRVRLQQIEQELQRARSQGLFLGGCRAAGDMSSGAAMFDMEYARWLDDDSKRLTDLRGGLQAHLLDTNLGLIVEECMQHYDELFQLKAALARSDVFHLLTGTWATPAERCFLWMGGFRPSDLLKILIQQLDPLTEQQMLGIYSLQQSSEQAEEALAQGLQQLHQSLADTVAAGTLNDGPGVPNYMSLMAIALDKLASLESFYQQADNLRQQTLHQLRRILTTRQAARCFLSIGEYYRRLRALSNLWSSRPRENFIGTESVSPTGTELQPMHNQPQQNQYSGF.

A compositionally biased stretch (polar residues) spans 115–125 (MRQQQQLHSGN). 2 disordered regions span residues 115-140 (MRQQ…SAQN) and 181-246 (KPGL…KSRL). Low complexity-rich tracts occupy residues 126–137 (SQSVGSTTDSSS) and 192–205 (QQQH…QQQL). The span at 219 to 242 (TRKDGKSVDAKTERRLAQNREAAR) shows a compositional bias: basic and acidic residues. The bZIP domain maps to 227–271 (DAKTERRLAQNREAARKSRLRKKAYVQNLETSRVRLQQIEQELQR). The tract at residues 229 to 249 (KTERRLAQNREAARKSRLRKK) is basic motif. The segment at 255 to 269 (LETSRVRLQQIEQEL) is leucine-zipper. The DOG1 domain occupies 292 to 506 (AAMFDMEYAR…RALSNLWSSR (215 aa)). Residues 513 to 539 (GTESVSPTGTELQPMHNQPQQNQYSGF) are disordered.

The protein belongs to the bZIP family. Interacts with NPR1/NH1 and NPR3/NH3.

Its subcellular location is the nucleus. Transcriptional regulator involved in defense response. Acts as a transcriptional activator in vitro. The chain is Transcription factor LG2 from Oryza sativa subsp. japonica (Rice).